Consider the following 464-residue polypeptide: Dihydrolipoyl dehydrogenase (464 aa).

FAD is bound by residues 33–41, Lys50, and Gly113; that span reads EPKYWGGVC. A disulfide bond links Cys41 and Cys46. Residues 178 to 182, Glu201, and 266 to 269 each bind NAD(+); these read GAGAI and AIGF. Residues Asp309 and Ala317 each contribute to the FAD site. His443 (proton acceptor) is an active-site residue.

Belongs to the class-I pyridine nucleotide-disulfide oxidoreductase family. As to quaternary structure, homodimer. Part of the PDH complex, consisting of multiple copies of AceE (E1), DlaT (E2) and Lpd (E3), and of the BCKADH complex, consisting of multiple copies of BkdA/BkdB (E1), BkdC (E2) and Lpd (E3). The cofactor is FAD.

It localises to the cytoplasm. It catalyses the reaction N(6)-[(R)-dihydrolipoyl]-L-lysyl-[protein] + NAD(+) = N(6)-[(R)-lipoyl]-L-lysyl-[protein] + NADH + H(+). In terms of biological role, lipoamide dehydrogenase is a component of the alpha-ketoacid dehydrogenase complexes. Catalyzes the reoxidation of dihydrolipoyl groups which are covalently attached to the lipoate acyltransferase components (E2) of the complexes. The chain is Dihydrolipoyl dehydrogenase (lpd) from Mycobacterium bovis (strain ATCC BAA-935 / AF2122/97).